Here is a 488-residue protein sequence, read N- to C-terminus: 1-aminocyclopropane-1-carboxylate synthase-like protein 1 (488 aa).

Lys-273 is subject to N6-(pyridoxal phosphate)lysine.

The protein belongs to the class-I pyridoxal-phosphate-dependent aminotransferase family. Homodimer. In terms of tissue distribution, expressed in young leaves and flowers. Not expressed in roots.

The polypeptide is 1-aminocyclopropane-1-carboxylate synthase-like protein 1 (ACS1) (Arabidopsis thaliana (Mouse-ear cress)).